A 506-amino-acid polypeptide reads, in one-letter code: Arylsulfatase A (506 aa).

Positions 1–17 (MALGTLFLALAAGLSTA) are cleaved as a signal peptide. Residues Asp28, Asp29, and Cys68 each coordinate Ca(2+). Residue Cys68 is the Nucleophile of the active site. Cys68 carries the 3-oxoalanine (Cys) modification. Lys122 provides a ligand contact to substrate. His124 is an active-site residue. Ser149 lines the substrate pocket. 2 cysteine pairs are disulfide-bonded: Cys155/Cys171 and Cys160/Cys167. A glycan (N-linked (GlcNAc...) asparagine) is linked at Asn157. Asn183 carries an N-linked (GlcNAc...) asparagine glycan. His228 contributes to the substrate binding site. Positions 280 and 281 each coordinate Ca(2+). 4 disulfide bridges follow: Cys299/Cys413, Cys487/Cys499, Cys488/Cys501, and Cys492/Cys498. Lys301 is a substrate binding site. N-linked (GlcNAc...) asparagine glycosylation occurs at Asn349.

It belongs to the sulfatase family. In terms of assembly, homodimer at neutral pH and homooctamer at acidic pH. Exists both as a single chain of 58 kDa (component A) or as a chain of 50 kDa (component B) linked by disulfide bond(s) to a 7 kDa chain (component C). Interacts with SUMF1. The cofactor is Ca(2+). Post-translationally, the conversion to 3-oxoalanine (also known as C-formylglycine, FGly), of a serine or cysteine residue in prokaryotes and of a cysteine residue in eukaryotes, is critical for catalytic activity. This post-translational modification is severely defective in multiple sulfatase deficiency (MSD).

It localises to the endoplasmic reticulum. The protein localises to the lysosome. It carries out the reaction an N-acyl-1-beta-D-(3-O-sulfo)-galactosyl-sphing-4-enine + H2O = a beta-D-galactosyl-(1&lt;-&gt;1')-N-acylsphing-4-enine + sulfate + H(+). Functionally, hydrolyzes cerebroside sulfate. The chain is Arylsulfatase A (Arsa) from Mus musculus (Mouse).